Here is a 520-residue protein sequence, read N- to C-terminus: Cytochrome P450 4F3 (520 aa).

A helical transmembrane segment spans residues 11–31 (LWPMAASPWLLLLLVGASWLL). Glu328 and Cys468 together coordinate heme.

Belongs to the cytochrome P450 family. It depends on heme as a cofactor. In terms of tissue distribution, selectively expressed in blood neutrophils and bone marrow cells. Coexpressed with CYP4F3B in prostate, ileum and trachea. As to expression, selectively expressed in liver and kidney. It is also the predominant CYP4F isoform in trachea and tissues of the gastrointestinal tract.

The protein resides in the endoplasmic reticulum membrane. It localises to the microsome membrane. The enzyme catalyses an organic molecule + reduced [NADPH--hemoprotein reductase] + O2 = an alcohol + oxidized [NADPH--hemoprotein reductase] + H2O + H(+). The catalysed reaction is leukotriene B4 + reduced [NADPH--hemoprotein reductase] + O2 = 20-hydroxy-leukotriene B4 + oxidized [NADPH--hemoprotein reductase] + H2O + H(+). It catalyses the reaction 20-hydroxy-leukotriene B4 + reduced [NADPH--hemoprotein reductase] + O2 = 20-oxo-leukotriene B4 + oxidized [NADPH--hemoprotein reductase] + 2 H2O + H(+). It carries out the reaction 20-oxo-leukotriene B4 + reduced [NADPH--hemoprotein reductase] + O2 = 20-carboxy-leukotriene B4 + oxidized [NADPH--hemoprotein reductase] + H2O + 2 H(+). The enzyme catalyses (5Z,8Z,11Z)-eicosatrienoate + reduced [NADPH--hemoprotein reductase] + O2 = 20-hydroxy-(5Z,8Z,11Z)-eicosatrienoate + oxidized [NADPH--hemoprotein reductase] + H2O + H(+). The catalysed reaction is (5Z,8Z,11Z,14Z)-eicosatetraenoate + reduced [NADPH--hemoprotein reductase] + O2 = 20-hydroxy-(5Z,8Z,11Z,14Z)-eicosatetraenoate + oxidized [NADPH--hemoprotein reductase] + H2O + H(+). It catalyses the reaction (5Z,8Z,11Z,14Z,17Z)-eicosapentaenoate + reduced [NADPH--hemoprotein reductase] + O2 = 19-hydroxy-(5Z,8Z,11Z,14Z,17Z)-eicosapentaenoate + oxidized [NADPH--hemoprotein reductase] + H2O + H(+). It carries out the reaction (5Z,8Z,11Z,14Z,17Z)-eicosapentaenoate + reduced [NADPH--hemoprotein reductase] + O2 = 20-hydroxy-(5Z,8Z,11Z,14Z,17Z)-eicosapentaenoate + oxidized [NADPH--hemoprotein reductase] + H2O + H(+). The enzyme catalyses (4Z,7Z,10Z,13Z,16Z,19Z)-docosahexaenoate + reduced [NADPH--hemoprotein reductase] + O2 = 21-hydroxy-(4Z,7Z,10Z,13Z,16Z,19Z)-docosahexaenoate + oxidized [NADPH--hemoprotein reductase] + H2O + H(+). The catalysed reaction is (4Z,7Z,10Z,13Z,16Z,19Z)-docosahexaenoate + reduced [NADPH--hemoprotein reductase] + O2 = 22-hydroxy-(4Z,7Z,10Z,13Z,16Z,19Z)-docosahexaenoate + oxidized [NADPH--hemoprotein reductase] + H2O + H(+). It catalyses the reaction 8,9-epoxy-(5Z,11Z,14Z)-eicosatrienoate + reduced [NADPH--hemoprotein reductase] + O2 = 20-hydroxy-8,9-epoxy-(5Z,11Z,14Z)-eicosatrienoate + oxidized [NADPH--hemoprotein reductase] + H2O + H(+). It carries out the reaction 11,12-epoxy-(5Z,8Z,14Z)-eicosatrienoate + reduced [NADPH--hemoprotein reductase] + O2 = 20-hydroxy-11,12-epoxy-(5Z,8Z,14Z)-eicosatrienoate + oxidized [NADPH--hemoprotein reductase] + H2O + H(+). The enzyme catalyses 14,15-epoxy-(5Z,8Z,11Z)-eicosatrienoate + reduced [NADPH--hemoprotein reductase] + O2 = 20-hydroxy-14,15-epoxy-(5Z,8Z,11Z)-eicosatrienoate + oxidized [NADPH--hemoprotein reductase] + H2O + H(+). The catalysed reaction is 12,13-epoxy-(9Z)-octadecenoate + reduced [NADPH--hemoprotein reductase] + O2 = 18-hydroxy-12,13-epoxy-(9Z)-octadecenoate + oxidized [NADPH--hemoprotein reductase] + H2O + H(+). It catalyses the reaction 9,10-epoxy-(12Z)-octadecenoate + reduced [NADPH--hemoprotein reductase] + O2 = 18-hydroxy-9,10-epoxy-(12Z)-octadecenoate + oxidized [NADPH--hemoprotein reductase] + H2O + H(+). It carries out the reaction 9,10-epoxyoctadecanoate + reduced [NADPH--hemoprotein reductase] + O2 = 18-hydroxy-9,10-epoxy-octadecanoate + oxidized [NADPH--hemoprotein reductase] + H2O + H(+). The enzyme catalyses (12R)-hydroxy-(9Z)-octadecenoate + reduced [NADPH--hemoprotein reductase] + O2 = (12R),18-dihydroxy-(9Z)-octadecenoate + oxidized [NADPH--hemoprotein reductase] + H2O + H(+). The catalysed reaction is 12-hydroxyoctadecanoate + reduced [NADPH--hemoprotein reductase] + O2 = 12,18-dihydroxyoctadecanoate + oxidized [NADPH--hemoprotein reductase] + H2O + H(+). It catalyses the reaction 5-hydroxy-(6E,8Z,11Z,14Z)-eicosatetraenoate + reduced [NADPH--hemoprotein reductase] + O2 = 5,20-dihydroxy-(6E,8Z,11Z,14Z)-eicosatetraenoate + oxidized [NADPH--hemoprotein reductase] + H2O + H(+). It carries out the reaction 8-hydroxy-(5Z,9E,11Z,14Z)-eicosatetraenoate + reduced [NADPH--hemoprotein reductase] + O2 = 8,20-dihydroxy-(5Z,9E,11Z,14Z)-eicosatetraenoate + oxidized [NADPH--hemoprotein reductase] + H2O + H(+). The enzyme catalyses 12-hydroxy-(5Z,8Z,10E,14Z)-eicosatetraenoate + reduced [NADPH--hemoprotein reductase] + O2 = 12,20-dihydroxy-(5Z,8Z,10E,14Z)-eicosatetraenoate + oxidized [NADPH--hemoprotein reductase] + H2O + H(+). The catalysed reaction is 5-hydroxy-(6E,8Z,11Z,14Z,17Z)-eicosapentaenoate + reduced [NADPH--hemoprotein reductase] + O2 = 5,20-dihydroxy-(6E,8Z,11Z,14Z,17Z)-eicosapentaenoate + oxidized [NADPH--hemoprotein reductase] + H2O + H(+). It catalyses the reaction lipoxin A4 + reduced [NADPH--hemoprotein reductase] + O2 = 20-hydroxy-lipoxin A4 + oxidized [NADPH--hemoprotein reductase] + H2O + H(+). It carries out the reaction lipoxin B4 + reduced [NADPH--hemoprotein reductase] + O2 = 20-hydroxy-lipoxin B4 + oxidized [NADPH--hemoprotein reductase] + H2O + H(+). The enzyme catalyses 22-hydroxydocosanoate + reduced [NADPH--hemoprotein reductase] + O2 = 22-oxodocosanoate + oxidized [NADPH--hemoprotein reductase] + 2 H2O + H(+). The catalysed reaction is 22-oxodocosanoate + reduced [NADPH--hemoprotein reductase] + O2 = docosanedioate + oxidized [NADPH--hemoprotein reductase] + H2O + 2 H(+). It catalyses the reaction docosanoate + reduced [NADPH--hemoprotein reductase] + O2 = 22-hydroxydocosanoate + oxidized [NADPH--hemoprotein reductase] + H2O + H(+). It carries out the reaction tetracosanoate + reduced [NADPH--hemoprotein reductase] + O2 = 24-hydroxytetracosanoate + oxidized [NADPH--hemoprotein reductase] + H2O + H(+). The enzyme catalyses hexacosanoate + reduced [NADPH--hemoprotein reductase] + O2 = 26-hydroxyhexacosanoate + oxidized [NADPH--hemoprotein reductase] + H2O + H(+). The catalysed reaction is 26-hydroxyhexacosanoate + reduced [NADPH--hemoprotein reductase] + O2 = 26-oxohexacosanoate + oxidized [NADPH--hemoprotein reductase] + 2 H2O + H(+). It catalyses the reaction 26-oxohexacosanoate + reduced [NADPH--hemoprotein reductase] + O2 = hexacosanedioate + oxidized [NADPH--hemoprotein reductase] + H2O + 2 H(+). It carries out the reaction 3-hydroxyoctadecanoate + reduced [NADPH--hemoprotein reductase] + O2 = 3,18-dihydroxyoctadecanoate + oxidized [NADPH--hemoprotein reductase] + H2O + H(+). The enzyme catalyses 3-hydroxyhexadecanoate + reduced [NADPH--hemoprotein reductase] + O2 = 3,16-dihydroxyhexadecanoate + oxidized [NADPH--hemoprotein reductase] + H2O + H(+). It participates in lipid metabolism; leukotriene B4 degradation. It functions in the pathway lipid metabolism; arachidonate metabolism. With respect to regulation, inhibited by carbon monoxide (CO). A cytochrome P450 monooxygenase involved in the metabolism of various endogenous substrates, including fatty acids and their oxygenated derivatives (oxylipins). Mechanistically, uses molecular oxygen inserting one oxygen atom into a substrate, and reducing the second into a water molecule, with two electrons provided by NADPH via cytochrome P450 reductase (CPR; NADPH-ferrihemoprotein reductase). May play a role in inactivation of pro-inflammatory and anti-inflammatory oxylipins during the resolution of inflammation. Functionally, catalyzes predominantly the oxidation of the terminal carbon (omega-oxidation) of oxylipins in myeloid cells, displaying higher affinity for arachidonate metabolite leukotriene B4 (LTB4). Inactivates LTB4 via three successive oxidative transformations to 20-hydroxy-LTB4, then to 20-oxo-LTB4 and to 20-carboxy-LTB4. Has omega-hydroxylase activity toward long-chain fatty acid epoxides with preference for 8,9-epoxy-(5Z,11Z,14Z)-eicosatrienoate (EET) and 9,10-epoxyoctadecanoate. Omega-hydroxylates monohydroxy polyunsaturated fatty acids (PUFAs), including hydroxyeicosatetraenoates (HETEs) and hydroxyeicosapentaenoates (HEPEs), to dihydroxy compounds. Contributes to the degradation of saturated very long-chain fatty acids (VLCFAs) such as docosanoic acid, by catalyzing successive omega-oxidations to the corresponding dicarboxylic acid, thereby initiating chain shortening. Has low hydroxylase activity toward PUFAs. Its function is as follows. Catalyzes predominantly the oxidation of the terminal carbon (omega-oxidation) of polyunsaturated fatty acids (PUFAs). Participates in the conversion of arachidonic acid to 20-hydroxyeicosatetraenoic acid (20-HETE), a signaling molecule acting both as vasoconstrictive and natriuretic with overall effect on arterial blood pressure. Has high omega-hydroxylase activity toward other PUFAs, including eicosatrienoic acid (ETA), eicosapentaenoic acid (EPA) and docosahexaenoic acid (DHA). Can also catalyze the oxidation of the penultimate carbon (omega-1 oxidation) of PUFAs with lower efficiency. Contributes to the degradation of saturated very long-chain fatty acids (VLCFAs) such as docosanoic acid and hexacosanoic acid, by catalyzing successive omega-oxidations to the corresponding dicarboxylic acids, thereby initiating chain shortening. Omega-hydroxylates long-chain 3-hydroxy fatty acids, likely initiating the oxidative conversion to the corresponding 3-hydroxydicarboxylic fatty acids. Has omega-hydroxylase activity toward long-chain fatty acid epoxides with preference for 8,9-epoxy-(5Z,11Z,14Z)-eicosatrienoate (EET) and 9,10-epoxyoctadecanoate. This chain is Cytochrome P450 4F3, found in Homo sapiens (Human).